A 420-amino-acid chain; its full sequence is Sodium-dependent phosphate transport protein 4 (420 aa).

Residues 1–21 are disordered; it reads MATKTELSPTARESKNAQDMQ. Residues Asn-49, Asn-60, Asn-68, and Asn-77 are each glycosylated (N-linked (GlcNAc...) asparagine). The next 8 helical transmembrane spans lie at 126-146, 154-174, 218-238, 256-276, 292-314, 319-341, 357-377, and 385-405; these read SIALSGMLLGCFTAILIGGFI, FVFYIFGGVGCVCCLLWFVVI, IWSICLGCFSHQWLVSTMVVY, LLSALPFIVAWVIGMVGGYLA, IATILGSLPSSALIVSLPYLNSG, TALLTLSCGLSTLCQSGIYINVL, GFSSIAPVIVPTVSGFLLSQD, and VFFLLFAVNLLGLLFYLIFGE.

It belongs to the major facilitator superfamily. Sodium/anion cotransporter family. Expressed in the liver and kidney. It is detected in proximal tubules in renal cortex as well as some tubules and glomeruli, with highest expression at the apical side of proximal tubules (at protein level).

It is found in the endoplasmic reticulum membrane. The protein resides in the cell membrane. It catalyses the reaction urate(in) + Na(+)(out) = urate(out) + Na(+)(in). Functionally, transports organic anions in a voltage-driven, multispecific, manner, on the apical side of renal proximal tubule. In particular, participates in the secretion of urate from the cell into the lumen. Urate is the end product of purine metabolism. May have roles in the metabolism and secretion of estrone sulfate, estradiol-17-beta-glucuronide, ochratoxin A, as wells as drugs such as bumetanide. This Homo sapiens (Human) protein is Sodium-dependent phosphate transport protein 4 (SLC17A3).